Here is a 265-residue protein sequence, read N- to C-terminus: Bidirectional sugar transporter SWEET7b (265 aa).

Residues Met1–Asn9 are Extracellular-facing. The chain crosses the membrane as a helical span at residues Met10–Phe30. The MtN3/slv 1 domain occupies Met10 to Lys97. Residues Tyr31–Asp45 are Cytoplasmic-facing. The chain crosses the membrane as a helical span at residues Pro46–His66. Residues Pro67–Ser69 lie on the Extracellular side of the membrane. Residues Ile70–Phe90 traverse the membrane as a helical segment. The Cytoplasmic segment spans residues Phe91 to Lys101. The helical transmembrane segment at Met102–Leu122 threads the bilayer. The Extracellular portion of the chain corresponds to Gly123 to Ser131. Residues Leu132–Ile152 traverse the membrane as a helical segment. Residues Ile133 to Arg215 enclose the MtN3/slv 2 domain. At Met153–Met165 the chain is on the cytoplasmic side. A helical membrane pass occupies residues Pro166 to Ile186. Over Arg187–Asp189 the chain is Extracellular. Residues Ile190–Tyr210 form a helical membrane-spanning segment. The Cytoplasmic segment spans residues Ala211–Leu265.

It belongs to the SWEET sugar transporter family. In terms of assembly, forms homooligomers and/or heterooligomers.

It localises to the cell membrane. Functionally, mediates both low-affinity uptake and efflux of sugar across the plasma membrane. The sequence is that of Bidirectional sugar transporter SWEET7b (SWEET7B) from Oryza sativa subsp. japonica (Rice).